The sequence spans 379 residues: Peritrophin-48 (379 aa).

The first 20 residues, 1 to 20 (MKAKTLTATLALILLAFAQA), serve as a signal peptide directing secretion. 2 Chitin-binding type-2 domains span residues 25–83 (ASYC…NCFF) and 86–143 (ANPC…NTGN). 2 disulfides stabilise this stretch: C60–C73 and C120–C133. N-linked (GlcNAc...) asparagine glycosylation is found at N150 and N168. 3 consecutive Chitin-binding type-2 domains span residues 151–208 (LSVC…ACSR), 224–283 (TSPC…RTLK), and 285–356 (CNRC…ACEN). C185 and C198 are oxidised to a cystine. N247 and N252 each carry an N-linked (GlcNAc...) asparagine glycan. C324 and C337 form a disulfide bridge. Residues N341, N356, and N373 are each glycosylated (N-linked (GlcNAc...) asparagine).

In terms of processing, glycosylated. Larval peritrophic membrane.

Binds chitin and may bind related oligosaccharide structures. In Chrysomya bezziana (Old world screw-worm fly), this protein is Peritrophin-48.